We begin with the raw amino-acid sequence, 437 residues long: 3-phosphoshikimate 1-carboxyvinyltransferase (437 aa).

3 residues coordinate 3-phosphoshikimate: Lys22, Ser23, and Arg27. Lys22 contacts phosphoenolpyruvate. Residues Gly96 and Arg125 each contribute to the phosphoenolpyruvate site. Positions 170, 172, 323, and 350 each coordinate 3-phosphoshikimate. Gln172 contacts phosphoenolpyruvate. The active-site Proton acceptor is Asp323. Positions 354 and 396 each coordinate phosphoenolpyruvate.

It belongs to the EPSP synthase family. As to quaternary structure, monomer.

It is found in the cytoplasm. It catalyses the reaction 3-phosphoshikimate + phosphoenolpyruvate = 5-O-(1-carboxyvinyl)-3-phosphoshikimate + phosphate. The protein operates within metabolic intermediate biosynthesis; chorismate biosynthesis; chorismate from D-erythrose 4-phosphate and phosphoenolpyruvate: step 6/7. In terms of biological role, catalyzes the transfer of the enolpyruvyl moiety of phosphoenolpyruvate (PEP) to the 5-hydroxyl of shikimate-3-phosphate (S3P) to produce enolpyruvyl shikimate-3-phosphate and inorganic phosphate. The chain is 3-phosphoshikimate 1-carboxyvinyltransferase from Synechococcus sp. (strain RCC307).